The following is an 860-amino-acid chain: MEARGLACESSNSAVKAPSIEDFVLVKPISRGAFGKVYLARKKCNSKLYAIKVVKKAEMVDKNMTEQMRAERDALALSKSPFIVHLFYSLQTATKVYLVMEYLIGGDVKSLLHIYGYFDEDMSLKYISEVALALDYLHRHSIIHRDLKPDNMLISNEGHIKLTDFGLSKVKLDRELNLMDILTTPSLVKPTKDYFRTPGQVLSLISSLGLNTPVIEGKRHSSTVLGSPMSCGKVKQRNRSLGSPLMKRRAEYMNSPVCTSRALASNSVFSPVLLARSLTPRLLKSGKRLDTMSVGSTHSCMLPSTTDSENCVSPMWEDEQNLHDVENIPQLNGREVDNRKSRNVPLTPVEKRKTLPARAQDHRPVFTPLNNQVTNSRNIKPDLSAKRLQFGATDNSATPLEKTVPHQSVGNGLIKPEPLKELKSSVKRAFEEVEKSPEQAEILFKKNDAAYERSFQIPEKTSRAHTGLTGIFSIVGLDDVKSAPKCQQFNERTGPKQSSPIAVAKNLFCELEDQGEEGGKAEPNSSSSTSPGDERNIRRSLSLESDVSAHEMSLVANTPQKLSDAKQEVLSSSFEELDENEISAVTPMARPTVATPKHSSAKQRRGECERSLLDHPHGLSDSMIKSPGFLKPKNVVAFRSYCSSINRSCTSHLSLASFDAMEMSASASFHNAVTPVQKKRPSLSNSLYQTPQQMVVSHTPYRTPKSVRRGPERVEGAPILGTPDYLAPELLLGKPHDFMVDWWALGVCLFEFLTGVPPFNDETPQLVFQNILNRDIPWPDGEEELTLNSRNAIEILLTMDTLKRAGLKELKDHPFFDGVDWENLHHQTMPFIPQPDNETDTSYFEARNTAQHLTVSGFSL.

The Protein kinase domain occupies 23–816; it reads FVLVKPISRG…LKELKDHPFF (794 aa). ATP contacts are provided by residues 29 to 37 and lysine 52; that span reads ISRGAFGKV. Aspartate 146 functions as the Proton acceptor in the catalytic mechanism. Residues 514–537 form a disordered region; that stretch reads QGEEGGKAEPNSSSSTSPGDERNI. Phosphothreonine; by CDK1 is present on threonine 722. Residues 817 to 860 form the AGC-kinase C-terminal domain; the sequence is DGVDWENLHHQTMPFIPQPDNETDTSYFEARNTAQHLTVSGFSL.

This sequence belongs to the protein kinase superfamily. AGC Ser/Thr protein kinase family. Post-translationally, phosphorylation at Thr-722 by CDK1 during M phase activates its kinase activity. Maximum phosphorylation occurs in prometaphase.

The protein resides in the cytoplasm. Its subcellular location is the cytoskeleton. It localises to the microtubule organizing center. It is found in the centrosome. The protein localises to the nucleus. The protein resides in the cleavage furrow. The enzyme catalyses L-seryl-[protein] + ATP = O-phospho-L-seryl-[protein] + ADP + H(+). It carries out the reaction L-threonyl-[protein] + ATP = O-phospho-L-threonyl-[protein] + ADP + H(+). Functionally, serine/threonine kinase that plays a key role in M phase by acting as a regulator of mitosis entry and maintenance. Acts by promoting the inactivation of protein phosphatase 2A (PP2A) during M phase: does not directly inhibit PP2A but acts by mediating phosphorylation and subsequent activation of arpp19 and ensa at 'Ser-62' and 'Ser-74', respectively. ARPP19 and ENSA are phosphatase inhibitors that specifically inhibit the ppp2r2d (PR55-delta) subunit of PP2A. Inactivation of PP2A during M phase is essential to keep cyclin-B1-CDK1 activity high. Following DNA damage, it is also involved in checkpoint recovery by being inhibited. May be involved in megakaryocyte differentiation. The sequence is that of Serine/threonine-protein kinase greatwall (mastl) from Danio rerio (Zebrafish).